The following is a 511-amino-acid chain: Maturase K (511 aa).

This sequence belongs to the intron maturase 2 family. MatK subfamily.

It localises to the plastid. It is found in the chloroplast. In terms of biological role, usually encoded in the trnK tRNA gene intron. Probably assists in splicing its own and other chloroplast group II introns. The chain is Maturase K from Paulownia tomentosa (Princess tree).